Here is a 122-residue protein sequence, read N- to C-terminus: Large ribosomal subunit protein uL14c (122 aa).

The protein belongs to the universal ribosomal protein uL14 family. As to quaternary structure, part of the 50S ribosomal subunit.

The protein localises to the plastid. The protein resides in the chloroplast. Functionally, binds to 23S rRNA. The sequence is that of Large ribosomal subunit protein uL14c from Capsella bursa-pastoris (Shepherd's purse).